The following is a 179-amino-acid chain: Auxin-induced protein IAA6 (179 aa).

The EAR-like (transcriptional repression) signature appears at Leu13–Leu17. A disordered region spans residues Phe31–Lys52. One can recognise a PB1 domain in the interval Lys75–Asp163.

It belongs to the Aux/IAA family. As to quaternary structure, homodimers and heterodimers.

Its subcellular location is the nucleus. Functionally, aux/IAA proteins are short-lived transcriptional factors that function as repressors of early auxin response genes at low auxin concentrations. Repression is thought to result from the interaction with auxin response factors (ARFs), proteins that bind to the auxin-responsive promoter element (AuxRE). Formation of heterodimers with ARF proteins may alter their ability to modulate early auxin response genes expression. In Pisum sativum (Garden pea), this protein is Auxin-induced protein IAA6 (IAA6).